A 364-amino-acid chain; its full sequence is tRNA 2-selenouridine synthase (364 aa).

The Rhodanese domain maps to 14 to 137; that stretch reads LIADTPIIDV…LRQTAIQATI (124 aa). Residue cysteine 97 is the S-selanylcysteine intermediate of the active site.

The protein belongs to the SelU family. In terms of assembly, monomer.

It catalyses the reaction 5-methylaminomethyl-2-thiouridine(34) in tRNA + selenophosphate + (2E)-geranyl diphosphate + H2O + H(+) = 5-methylaminomethyl-2-selenouridine(34) in tRNA + (2E)-thiogeraniol + phosphate + diphosphate. The enzyme catalyses 5-methylaminomethyl-2-thiouridine(34) in tRNA + (2E)-geranyl diphosphate = 5-methylaminomethyl-S-(2E)-geranyl-thiouridine(34) in tRNA + diphosphate. It carries out the reaction 5-methylaminomethyl-S-(2E)-geranyl-thiouridine(34) in tRNA + selenophosphate + H(+) = 5-methylaminomethyl-2-(Se-phospho)selenouridine(34) in tRNA + (2E)-thiogeraniol. The catalysed reaction is 5-methylaminomethyl-2-(Se-phospho)selenouridine(34) in tRNA + H2O = 5-methylaminomethyl-2-selenouridine(34) in tRNA + phosphate. Functionally, involved in the post-transcriptional modification of the uridine at the wobble position (U34) of tRNA(Lys), tRNA(Glu) and tRNA(Gln). Catalyzes the conversion of 2-thiouridine (S2U-RNA) to 2-selenouridine (Se2U-RNA). Acts in a two-step process involving geranylation of 2-thiouridine (S2U) to S-geranyl-2-thiouridine (geS2U) and subsequent selenation of the latter derivative to 2-selenouridine (Se2U) in the tRNA chain. The sequence is that of tRNA 2-selenouridine synthase from Escherichia coli O45:K1 (strain S88 / ExPEC).